A 385-amino-acid polypeptide reads, in one-letter code: Transcription factor-like protein DPB (385 aa).

2 disordered regions span residues 1–53 (MTTT…EQTI) and 71–102 (DIQG…KTGR). Polar residues predominate over residues 22 to 31 (PSTRSWGTAV). Low complexity predominate over residues 32-53 (SGQSVSTSGSMGSPSSRSEQTI). A DNA-binding region spans residues 101 to 184 (GRGLRQFSMK…KKEIQWRGLP (84 aa)). A DEF box motif is present at residues 150 to 184 (DEKNIRRRVYDALNVLMAMDIISKDKKEIQWRGLP). The stretch at 185-234 (RTSLSDIEELKNERLSLRNRIEKKTAYSQELEEQYVGLQNLIQRNEHLYS) forms a coiled coil. The segment at 296-385 (PPQQPNGRNN…IMNSSMKPEN (90 aa)) is disordered. Polar residues predominate over residues 300 to 327 (PNGRNNSQLVCHNFTPENPNKGPSTGPT). A compositionally biased stretch (low complexity) spans 336-349 (HLQSQQHQQHSQLQ). Residues 355–364 (ETNNVTSSAD) are compositionally biased toward polar residues.

This sequence belongs to the E2F/DP family. Heterodimer with non-phosphorylated E2FC. No interaction with phosphorylated E2FC. Interacts preferentially with E2FC, but also with E2FA and E2FB. Interacts with SKP2A. Targeted for proteasomal degradation by the SCF(SKP2A) E3 ubiquitin ligase complex. Phosphorylated. In terms of tissue distribution, ubiquitous.

Its subcellular location is the nucleus. It localises to the cytoplasm. Functionally, involved in the regulation of the G1/S transition. Increases the DNA binding activity of E2F proteins after heterodimerization. The complex DPB/E2FC restricts cell division and lateral root initiation and may function as a negative regulator of E2F-regulated genes. The interaction with SKP2A is controlled by auxin. The polypeptide is Transcription factor-like protein DPB (DPB) (Arabidopsis thaliana (Mouse-ear cress)).